A 312-amino-acid chain; its full sequence is Porphobilinogen deaminase (312 aa).

Position 241 is an S-(dipyrrolylmethanemethyl)cysteine (Cys241).

The protein belongs to the HMBS family. As to quaternary structure, monomer. It depends on dipyrromethane as a cofactor.

It carries out the reaction 4 porphobilinogen + H2O = hydroxymethylbilane + 4 NH4(+). It participates in porphyrin-containing compound metabolism; protoporphyrin-IX biosynthesis; coproporphyrinogen-III from 5-aminolevulinate: step 2/4. Its pathway is porphyrin-containing compound metabolism; chlorophyll biosynthesis. Tetrapolymerization of the monopyrrole PBG into the hydroxymethylbilane pre-uroporphyrinogen in several discrete steps. The polypeptide is Porphobilinogen deaminase (Chlorobaculum tepidum (strain ATCC 49652 / DSM 12025 / NBRC 103806 / TLS) (Chlorobium tepidum)).